Consider the following 199-residue polypeptide: GTP cyclohydrolase-2 (199 aa).

A GTP-binding site is contributed by 52 to 56 (RMHSE). Cys-57, Cys-68, and Cys-70 together coordinate Zn(2+). GTP is bound by residues Gln-73, 94–96 (EGR), and Thr-116. Asp-128 acts as the Proton acceptor in catalysis. Residue Arg-130 is the Nucleophile of the active site. GTP-binding residues include Thr-151 and Lys-156.

It belongs to the GTP cyclohydrolase II family. Zn(2+) is required as a cofactor.

The catalysed reaction is GTP + 4 H2O = 2,5-diamino-6-hydroxy-4-(5-phosphoribosylamino)-pyrimidine + formate + 2 phosphate + 3 H(+). It participates in cofactor biosynthesis; riboflavin biosynthesis; 5-amino-6-(D-ribitylamino)uracil from GTP: step 1/4. In terms of biological role, catalyzes the conversion of GTP to 2,5-diamino-6-ribosylamino-4(3H)-pyrimidinone 5'-phosphate (DARP), formate and pyrophosphate. This chain is GTP cyclohydrolase-2, found in Aliivibrio salmonicida (strain LFI1238) (Vibrio salmonicida (strain LFI1238)).